Here is a 527-residue protein sequence, read N- to C-terminus: Splicing factor MUD2 (527 aa).

A disordered region spans residues 36–169; sequence DNAVIDTHFK…SKFNGDRDKR (134 aa). Over residues 42 to 55 the composition is skewed to basic and acidic residues; it reads THFKRQKSDGELPK. Phosphoserine is present on serine 49. The span at 60–85 shows a compositional bias: polar residues; the sequence is RNVSHSNNRGPSSIITMSTNRTTYEQ. A compositionally biased stretch (basic and acidic residues) spans 94 to 109; the sequence is SYRDASGRSYNRENRY. Polar residues predominate over residues 110–122; the sequence is SSHNTGPQWNNNP. 2 stretches are compositionally biased toward basic and acidic residues: residues 125-141 and 155-169; these read RQRDERRGRNERFDRRG and RKNEGSKFNGDRDKR. An RRM domain is found at 424–511; that stretch reads LLLLNCLDPL…QFNDRTVLCT (88 aa).

MSL5, MUD2 and PRP40 interact to form the commitment complex 2 (CC2), a precursor of mature spliceosomes.

Its function is as follows. Splicing factor that contacts pre-mRNA directly and is a component of the pre-mRNA-U1 snRNP complex (commitment complex 2) that forms during early spliceosome assembly in yeast extracts. In Saccharomyces cerevisiae (strain ATCC 204508 / S288c) (Baker's yeast), this protein is Splicing factor MUD2 (MUD2).